Reading from the N-terminus, the 277-residue chain is Large ribosomal subunit protein uL2 (277 aa).

The segment at Arg-219–Lys-277 is disordered. A compositionally biased stretch (basic and acidic residues) spans Asp-231–Lys-241. Residues Lys-256–Lys-277 are compositionally biased toward basic residues.

This sequence belongs to the universal ribosomal protein uL2 family. As to quaternary structure, part of the 50S ribosomal subunit. Forms a bridge to the 30S subunit in the 70S ribosome.

In terms of biological role, one of the primary rRNA binding proteins. Required for association of the 30S and 50S subunits to form the 70S ribosome, for tRNA binding and peptide bond formation. It has been suggested to have peptidyltransferase activity; this is somewhat controversial. Makes several contacts with the 16S rRNA in the 70S ribosome. The protein is Large ribosomal subunit protein uL2 of Campylobacter concisus (strain 13826).